The following is a 454-amino-acid chain: Bleomycin hydrolase (454 aa).

The residue at position 1 (Met-1) is an N-acetylmethionine. Residues Cys-73 and His-372 contribute to the active site. Lys-391 is modified (N6-acetyllysine). Residue Asn-396 is part of the active site.

This sequence belongs to the peptidase C1 family. Homohexamer. Interacts with NUDT12 (via ANK repeats). As to expression, expressed at relatively higher levels in the stomach, esophagus, spleen, thymus and testis, and at lower levels in the skin, lung and skeletal muscle.

The protein localises to the cytoplasm. It localises to the cytoplasmic granule. The catalysed reaction is Inactivates bleomycin B2 (a cytotoxic glycometallopeptide) by hydrolysis of a carboxyamide bond of beta-aminoalanine, but also shows general aminopeptidase activity. The specificity varies somewhat with source, but amino acid arylamides of Met, Leu and Ala are preferred.. Its function is as follows. The normal physiological role of BLM hydrolase is unknown, but it catalyzes the inactivation of the antitumor drug BLM (a glycopeptide) by hydrolyzing the carboxamide bond of its B-aminoalaninamide moiety thus protecting normal and malignant cells from BLM toxicity. Binds single-stranded DNA with higher affinity than double-stranded DNA. May play an important role in the metabolism of antibiotics. The protein is Bleomycin hydrolase (Blmh) of Rattus norvegicus (Rat).